The chain runs to 102 residues: Protamine-2 (102 aa).

Disordered regions lie at residues 1 to 40 and 67 to 102; these read MVRY…SPEH and HRQQ…CRRH. Phosphoserine is present on residues S8, S10, and S37.

Belongs to the protamine P2 family. In terms of assembly, interacts with TDRP. In terms of processing, proteolytic processing into mature chains is required for histone eviction during spermatogenesis. Transition proteins (TNP1 and TNP2) are required for processing. In terms of tissue distribution, testis.

The protein localises to the nucleus. The protein resides in the chromosome. In terms of biological role, protamines substitute for histones in the chromatin of sperm during the haploid phase of spermatogenesis. They compact sperm DNA into a highly condensed, stable and inactive complex. This chain is Protamine-2 (PRM2), found in Pan troglodytes (Chimpanzee).